We begin with the raw amino-acid sequence, 275 residues long: NVFNALRGSNIEIILDVPLQDLQSLTDPSRANGWVQDNIINHFPDVKFKYIAVGNKVSPGNNGQYAPFVAPAMQNVYNALAAAGLQDQIKVSTATYSGILANTYPPKDSIFRGEFNSFINPIIQFLVQHNLPLLANVYPYFGHIFNTADVPLSYALFTQQEANPAGYQNLFDALLDSMYFAVEKAGGQNVEIIVSESGWPSEGNSAATIENAQTYYENLINHVKSGAGTPKKPGKAIETYLFAMFDENNKEGDITEKHFGLFSPDQRAKYQLNFN.

Catalysis depends on E196, which acts as the Nucleophile.

This sequence belongs to the glycosyl hydrolase 17 family. The N-terminus is blocked.

It localises to the secreted. It is found in the extracellular space. It carries out the reaction Hydrolysis of (1-&gt;3)-beta-D-glucosidic linkages in (1-&gt;3)-beta-D-glucans.. In terms of biological role, implicated in the defense of plants against pathogens. This chain is Glucan endo-1,3-beta-glucosidase, acidic isoform PR-N (PRN), found in Nicotiana tabacum (Common tobacco).